The primary structure comprises 512 residues: Protein maelstrom homolog (512 aa).

Positions 9–75 (AKGPFYFFMM…NPKEAGGYGE (67 aa)) form a DNA-binding region, HMG box. Disordered regions lie at residues 49 to 72 (APHEREPYNQRAKQNKANPKEAGG), 360 to 421 (RMSK…GTRA), and 439 to 465 (QSANRSPTKKNPWSRENKLTEVRDPQS). A compositionally biased stretch (polar residues) spans 360-370 (RMSKLTTTSDN). Over residues 379 to 388 (RSTDRTDRDV) the composition is skewed to basic and acidic residues. Composition is skewed to polar residues over residues 393–421 (IYSSRAGTVTGKPSTIVPQQPASSGGTRA) and 439–449 (QSANRSPTKKN). Residues 451-464 (WSRENKLTEVRDPQ) show a composition bias toward basic and acidic residues.

This sequence belongs to the maelstrom family.

The protein resides in the cytoplasm. It is found in the nucleus. In terms of biological role, plays a central role during gametogenesis by repressing transposable elements and preventing their mobilization, which is essential for the germline integrity. Probably acts via the piRNA metabolic process, which mediates the repression of transposable elements during meiosis by forming complexes composed of piRNAs and Piwi proteins and governs the repression of transposons. The chain is Protein maelstrom homolog (mael) from Culex quinquefasciatus (Southern house mosquito).